Reading from the N-terminus, the 380-residue chain is Protein Wnt-5a (380 aa).

Residues M1–A37 form the signal peptide. Positions Q38 to Y61 are excised as a propeptide. A disulfide bond links C104 and C115. N114 and N120 each carry an N-linked (GlcNAc...) asparagine glycan. Disulfide bonds link C154–C162, C164–C182, C238–C252, C240–C247, C309–C340, C325–C335, C339–C379, C355–C370, C357–C367, and C362–C363. S244 carries O-palmitoleoyl serine; by PORCN lipidation. N312 and N326 each carry an N-linked (GlcNAc...) asparagine glycan.

The protein belongs to the Wnt family. In terms of assembly, forms a soluble 1:1 complex with AFM; this prevents oligomerization and is required for prolonged biological activity. The complex with AFM may represent the physiological form in body fluids. Homooligomer; disulfide-linked, leading to inactivation. Interacts with PORCN. Interacts with WLS. Interacts with glypican GCP3. Interacts with PKD1 (via extracellular domain). Interacts with TMEM67. Glycosylation is necessary for secretion but not for activity. In terms of processing, palmitoleoylation is required for efficient binding to frizzled receptors. Depalmitoleoylation leads to Wnt signaling pathway inhibition. Post-translationally, proteolytic processing by TIKI1 and TIKI2 promotes oxidation and formation of large disulfide-bond oligomers, leading to inactivation of WNT5A. In terms of tissue distribution, expressed in a gradient at the caudal end of the embryo during gastrulation and later in the distal-most aspect of several structures that extend from the body such as the limbs and genital tubercle.

The protein resides in the secreted. It localises to the extracellular space. Its subcellular location is the extracellular matrix. Ligand for members of the frizzled family of seven transmembrane receptors. Can activate or inhibit canonical Wnt signaling, depending on receptor context. In the presence of FZD4, activates beta-catenin signaling. In the presence of ROR2, inhibits the canonical Wnt pathway by promoting beta-catenin degradation through a GSK3-independent pathway which involves down-regulation of beta-catenin-induced reporter gene expression. Suppression of the canonical pathway allows chondrogenesis to occur and inhibits tumor formation. Stimulates cell migration. Decreases proliferation, migration, invasiveness and clonogenicity of carcinoma cells and may act as a tumor suppressor. Mediates motility of melanoma cells. Required during embryogenesis for extension of the primary anterior-posterior axis and for outgrowth of limbs and the genital tubercle. Inhibits type II collagen expression in chondrocytes. In Mus musculus (Mouse), this protein is Protein Wnt-5a (Wnt5a).